Consider the following 31-residue polypeptide: Cyclotide Hyfl-A (31 aa).

Residues 1-31 (SISCGESCVYIPCTVTALVGCTCKDKVCYLN) constitute a cross-link (cyclopeptide (Ser-Asn)). Intrachain disulfides connect cysteine 4-cysteine 21, cysteine 8-cysteine 23, and cysteine 13-cysteine 28.

The protein belongs to the cyclotide family. Bracelet subfamily. In terms of processing, this is a cyclic peptide.

Its function is as follows. Probably participates in a plant defense mechanism. This chain is Cyclotide Hyfl-A, found in Hybanthus floribundus (Greenviolet).